Consider the following 157-residue polypeptide: 6,7-dimethyl-8-ribityllumazine synthase (157 aa).

Residues Phe-23, 57 to 59 (AFE), and 81 to 83 (AVI) each bind 5-amino-6-(D-ribitylamino)uracil. 86 to 87 (AT) contributes to the (2S)-2-hydroxy-3-oxobutyl phosphate binding site. Residue His-89 is the Proton donor of the active site. Phe-114 contacts 5-amino-6-(D-ribitylamino)uracil. Residue Arg-128 coordinates (2S)-2-hydroxy-3-oxobutyl phosphate.

The protein belongs to the DMRL synthase family.

The catalysed reaction is (2S)-2-hydroxy-3-oxobutyl phosphate + 5-amino-6-(D-ribitylamino)uracil = 6,7-dimethyl-8-(1-D-ribityl)lumazine + phosphate + 2 H2O + H(+). It participates in cofactor biosynthesis; riboflavin biosynthesis; riboflavin from 2-hydroxy-3-oxobutyl phosphate and 5-amino-6-(D-ribitylamino)uracil: step 1/2. Functionally, catalyzes the formation of 6,7-dimethyl-8-ribityllumazine by condensation of 5-amino-6-(D-ribitylamino)uracil with 3,4-dihydroxy-2-butanone 4-phosphate. This is the penultimate step in the biosynthesis of riboflavin. The chain is 6,7-dimethyl-8-ribityllumazine synthase from Desulforapulum autotrophicum (strain ATCC 43914 / DSM 3382 / VKM B-1955 / HRM2) (Desulfobacterium autotrophicum).